Reading from the N-terminus, the 136-residue chain is 5-hydroxyisourate hydrolase (136 aa).

An N-terminal signal peptide occupies residues 1–22 (MKRHILATVIASLVAAPAMALA). The substrate site is built by His31, Arg69, and Tyr133.

This sequence belongs to the transthyretin family. 5-hydroxyisourate hydrolase subfamily. Homotetramer.

Its subcellular location is the periplasm. The catalysed reaction is 5-hydroxyisourate + H2O = 5-hydroxy-2-oxo-4-ureido-2,5-dihydro-1H-imidazole-5-carboxylate + H(+). Its function is as follows. Catalyzes the hydrolysis of 5-hydroxyisourate (HIU) to 2-oxo-4-hydroxy-4-carboxy-5-ureidoimidazoline (OHCU). The protein is 5-hydroxyisourate hydrolase (hiuH) of Salmonella dublin.